Here is a 127-residue protein sequence, read N- to C-terminus: Putative adhesin P1-like protein MPN_203 (127 aa).

The tract at residues 70–90 (TENFTQPQPQPQALKTTTPVF) is disordered.

Belongs to the adhesin P1 family.

The sequence is that of Putative adhesin P1-like protein MPN_203 from Mycoplasma pneumoniae (strain ATCC 29342 / M129 / Subtype 1) (Mycoplasmoides pneumoniae).